We begin with the raw amino-acid sequence, 377 residues long: MSVTELKERHMAATQTVNDLREKLKQKRLQLLDTDVSGYARSQGKTPVTFGPTDLVCCRILQGHTGKVYSLDWTPEKNRIVSASQDGRLIVWNALTSQKTHAIKLPCAWVMTCAFSPSGQSVACGGLDSVCSIFNLNSPIDKDGNHPVSRMLSGHKGYVSSCQYVPDEDTHLITSSGDQTCVLWDITTGLRTSVFGGEFQSGHTADVQSVSISSSNPRLFVSGSCDTTARLWDTRVASRAQRTFYGHEGDVNTVKFFPDGNRFGTGSEDGTCRLFDIRTEHQLQVYYQPHGDGDIPHVTSMAFSISGRLLFVGYSNGDCYVWDTLLAKVVLNLGGVQNSHEGRISCLGLSADGSALCTGSWDTNLKIWAFGGHRSVI.

WD repeat units follow at residues 63 to 93 (GHTG…IVWN), 105 to 135 (LPCA…SIFN), 154 to 185 (GHKG…VLWD), 202 to 233 (GHTA…RLWD), 246 to 276 (GHEG…RLFD), 293 to 323 (GDIP…YVWD), and 339 to 369 (SHEG…KIWA).

It belongs to the WD repeat G protein beta family. In terms of assembly, g proteins are composed of 3 units, alpha, beta and gamma.

Guanine nucleotide-binding proteins (G proteins) are involved as a modulator or transducer in various transmembrane signaling systems. The beta and gamma chains are required for the GTPase activity, for replacement of GDP by GTP, and for G protein-effector interaction. This Nicotiana tabacum (Common tobacco) protein is Guanine nucleotide-binding protein subunit beta-1.